Reading from the N-terminus, the 320-residue chain is Cytochrome f (320 aa).

Residues 1–35 (MQTRKTFSWIKEQINRSISVSLMIYIITRPSISIA) form the signal peptide. Heme contacts are provided by Y36, C56, C59, and H60. Residues 286-306 (VQGLLFFLASVILAQIFLVLK) form a helical membrane-spanning segment.

This sequence belongs to the cytochrome f family. In terms of assembly, the 4 large subunits of the cytochrome b6-f complex are cytochrome b6, subunit IV (17 kDa polypeptide, petD), cytochrome f and the Rieske protein, while the 4 small subunits are PetG, PetL, PetM and PetN. The complex functions as a dimer. Heme serves as cofactor.

Its subcellular location is the plastid. It localises to the chloroplast thylakoid membrane. Functionally, component of the cytochrome b6-f complex, which mediates electron transfer between photosystem II (PSII) and photosystem I (PSI), cyclic electron flow around PSI, and state transitions. This Daucus carota (Wild carrot) protein is Cytochrome f.